A 162-amino-acid chain; its full sequence is Probable chemoreceptor glutamine deamidase CheD (162 aa).

The protein belongs to the CheD family.

The catalysed reaction is L-glutaminyl-[protein] + H2O = L-glutamyl-[protein] + NH4(+). Probably deamidates glutamine residues to glutamate on methyl-accepting chemotaxis receptors (MCPs), playing an important role in chemotaxis. The polypeptide is Probable chemoreceptor glutamine deamidase CheD (Clostridium botulinum (strain ATCC 19397 / Type A)).